We begin with the raw amino-acid sequence, 792 residues long: Phenylalanine--tRNA ligase beta subunit (792 aa).

Residues 39-147 enclose the tRNA-binding domain; it reads GESLGQVVVA…DDAPVGQALA (109 aa). A B5 domain is found at 400–475; sequence PQPARILLRR…RIHGYDRVPT (76 aa). Residues D453, D459, E462, and D463 each contribute to the Mg(2+) site. In terms of domain architecture, FDX-ACB spans 698–791; that stretch reads SRFPSVRRDL…IEREHRARIR (94 aa).

This sequence belongs to the phenylalanyl-tRNA synthetase beta subunit family. Type 1 subfamily. Tetramer of two alpha and two beta subunits. It depends on Mg(2+) as a cofactor.

It is found in the cytoplasm. It catalyses the reaction tRNA(Phe) + L-phenylalanine + ATP = L-phenylalanyl-tRNA(Phe) + AMP + diphosphate + H(+). The polypeptide is Phenylalanine--tRNA ligase beta subunit (Xanthomonas oryzae pv. oryzae (strain KACC10331 / KXO85)).